A 241-amino-acid polypeptide reads, in one-letter code: Small ribosomal subunit protein uS2 (241 aa).

It belongs to the universal ribosomal protein uS2 family.

The chain is Small ribosomal subunit protein uS2 from Pectobacterium atrosepticum (strain SCRI 1043 / ATCC BAA-672) (Erwinia carotovora subsp. atroseptica).